The chain runs to 86 residues: MKPDIHPVYRTVVFHDTSANEYVKVGSTIKTEREIELGGVTYPYVTIDVSSKSHPFYTGRQKTFDSESSAARFQKRFGHFIGAKRG.

Belongs to the bacterial ribosomal protein bL31 family. Type B subfamily. As to quaternary structure, part of the 50S ribosomal subunit.

This Salmonella paratyphi A (strain ATCC 9150 / SARB42) protein is Large ribosomal subunit protein bL31B.